A 126-amino-acid polypeptide reads, in one-letter code: Cystatin-C (126 aa).

Residues 1 to 18 (MKMLVFPVLAALFAVGLG) form the signal peptide. The 94-residue stretch at 22–115 (GAPRDINISE…CTFSVWSRPW (94 aa)) folds into the Cystatin domain. Residues 64–68 (QVVSG) carry the Secondary area of contact motif. Intrachain disulfides connect Cys-82–Cys-92 and Cys-106–Cys-126.

The protein belongs to the cystatin family. As to expression, ubiquitously expressed in normal tissues including brain, eye, gill, heart, gullet, liver, spleen, stomach, pyloric ceca, intestine, kidney and muscle. Expressed, but not up-regulated, in lipopolysaccharide (LPS)-stimulated tissues including kidney, spleen, muscle and gill.

The protein resides in the secreted. Thiol protease inhibitor. Has high papain inhibitory activity and inhibits to a lesser extent fish cathepsins L, S, K, F, X and bovine cathepsin B in vitro. This is Cystatin-C from Paralichthys olivaceus (Bastard halibut).